The primary structure comprises 908 residues: MTDMNIENRKLNRPASENDKQHKKVFPIEAEAFHSPEETLARLNSHRQGLTIEEASERLKVYGRNEVAHEQVPPALIQLLQAFNNPFIYVLMALAGVSFITDYWLPLRRGEETDLTGVLIILTMVSLSGLLRFWQEFRTNRAAQALKKMVRTTATVLRRGPGNIGAVQEEIPIEELVPGDVVFLAAGDLVPADVRLLASRDLFISQSILSGESLPVEKYDVMADVAGKDSEQLPDKDKSLLDLGNICLMGTNVTSGRAQAVVVATGSRTWFGSLAKSIVGTRTQTAFDRGVNSVSWLLIRFMLIMVPVVLLINGFSKGDWVEASLFALAVAVGLTPEMLPMIVSSNLAKGAIAMSRRKVIVKRLNAIQNFGAMDVLCTDKTGTLTQDNIFLEHHLDVSGVKSSRVLMLAWLNSSSQSGARNVMDRAILRFGEGRIAPSTKARFIKRDELPFDFVRRRVSVLVEDAQHGDRCLICKGAVEEMMMVATHLREGDRVVALTETRRELLLAKTEDYNAQGFRVLLIATRKLDGSGNNPTLSVEDETELTIEGMLTFLDPPKESAGKAIAALRDNGVAVKVLTGDNPVVTARICLEVGIDTHDILTGTQVEAMSDAELASEVEKRAVFARLTPLQKTRILQALQKNGHTVGFLGDGINDAPALRDADVGISVDSAADIAKESSDIILLEKDLMVLEEGVIKGRETFGNIIKYLNMTASSNFGNVFSVLVASAFIPFLPMLAIHLLIQNLMYDISQLSLPWDKMDKEFLRKPRKWDAKNIGRFMLWIGPTSSIFDITTFALMWYVFAANNVEAQALFQSGWFIEGLLSQTLVVHMLRTQKIPFIQSRATLPVLLTTGLIMAIGIYIPFSPLGAMVGLEPLPLSYFPWLVATLLSYCLVAQGMKRFYIKRFGQWF.

Residues 1 to 20 (MTDMNIENRKLNRPASENDK) show a composition bias toward basic and acidic residues. The tract at residues 1–21 (MTDMNIENRKLNRPASENDKQ) is disordered. At 1 to 80 (MTDMNIENRK…QVPPALIQLL (80 aa)) the chain is on the cytoplasmic side. A helical transmembrane segment spans residues 81-101 (QAFNNPFIYVLMALAGVSFIT). Topologically, residues 102–113 (DYWLPLRRGEET) are extracellular. The chain crosses the membrane as a helical span at residues 114–134 (DLTGVLIILTMVSLSGLLRFW). The Cytoplasmic segment spans residues 135–293 (QEFRTNRAAQ…QTAFDRGVNS (159 aa)). The chain crosses the membrane as a helical span at residues 294-314 (VSWLLIRFMLIMVPVVLLING). Topologically, residues 315–323 (FSKGDWVEA) are extracellular. The chain crosses the membrane as a helical span at residues 324–341 (SLFALAVAVGLTPEMLPM). Glu337 provides a ligand contact to Mg(2+). Topologically, residues 342 to 704 (IVSSNLAKGA…IKGRETFGNI (363 aa)) are cytoplasmic. Asp379 acts as the 4-aspartylphosphate intermediate in catalysis. Positions 650, 654, and 718 each coordinate Mg(2+). Residues 705 to 724 (IKYLNMTASSNFGNVFSVLV) form a helical membrane-spanning segment. At 725–733 (ASAFIPFLP) the chain is on the extracellular side. A helical membrane pass occupies residues 734 to 753 (MLAIHLLIQNLMYDISQLSL). Mg(2+)-binding residues include Asn743 and Asp747. The Cytoplasmic portion of the chain corresponds to 754–775 (PWDKMDKEFLRKPRKWDAKNIG). Residues 776–799 (RFMLWIGPTSSIFDITTFALMWYV) form a helical membrane-spanning segment. The Extracellular segment spans residues 800-808 (FAANNVEAQ). The helical transmembrane segment at 809–827 (ALFQSGWFIEGLLSQTLVV) threads the bilayer. Residues 828–840 (HMLRTQKIPFIQS) lie on the Cytoplasmic side of the membrane. A helical membrane pass occupies residues 841–860 (RATLPVLLTTGLIMAIGIYI). The Extracellular portion of the chain corresponds to 861–875 (PFSPLGAMVGLEPLP). The helical transmembrane segment at 876 to 895 (LSYFPWLVATLLSYCLVAQG) threads the bilayer. At 896–908 (MKRFYIKRFGQWF) the chain is on the cytoplasmic side.

Belongs to the cation transport ATPase (P-type) (TC 3.A.3) family. Type IIIB subfamily.

Its subcellular location is the cell inner membrane. The enzyme catalyses Mg(2+)(out) + ATP + H2O = Mg(2+)(in) + ADP + phosphate + H(+). Mediates magnesium influx to the cytosol. The protein is Magnesium-transporting ATPase, P-type 1 (mgtB) of Salmonella typhimurium (strain LT2 / SGSC1412 / ATCC 700720).